Here is a 594-residue protein sequence, read N- to C-terminus: Keratin, type II cytoskeletal 2 oral (594 aa).

Residues 1-164 are head; sequence MSRQACKKSF…DPQIGQVKAQ (164 aa). Arginine 85 and arginine 104 each carry omega-N-methylarginine. Residues 165 to 200 are coil 1A; sequence EREQIKTLNNKFASFIDKVRFLEQQNKVLETKWELL. The 316-residue stretch at 165–480 folds into the IF rod domain; the sequence is EREQIKTLNN…KLLEGEECRL (316 aa). The interval 201–221 is linker 1; it reads QQQTIRSGSGPQNLEPFFESY. The tract at residues 222–313 is coil 1B; that stretch reads ISCLRKQLDS…TLYDMELSQI (92 aa). The linker 12 stretch occupies residues 314–337; sequence QSHVSDTSVVLSMDNNRCLDLDSI. The segment at 338–476 is coil 2; the sequence is IAEVKAQYED…ATYRKLLEGE (139 aa). Positions 477–594 are tail; sequence ECRLSGEFQN…TTSSSQQRSK (118 aa). The interval 497–594 is disordered; the sequence is TSTSSSGSFR…TTSSSQQRSK (98 aa). A compositionally biased stretch (gly residues) spans 506–522; the sequence is RGTGGSNYGGDSSGRSG. Low complexity predominate over residues 523–551; sequence GSSSSSSRGSSSRGSSGSRLGSGGSISVS. Position 541 is an omega-N-methylarginine (arginine 541). The span at 552-564 shows a compositional bias: polar residues; that stretch reads QQRMGFNSGGSQT. Positions 565–594 are enriched in low complexity; that stretch reads SVGSSYKSGRGGSSSVQFSQTTSSSQQRSK.

Belongs to the intermediate filament family. As to quaternary structure, heterotetramer of two type I and two type II keratins.

Its function is as follows. Probably contributes to terminal cornification. In Mus musculus (Mouse), this protein is Keratin, type II cytoskeletal 2 oral.